We begin with the raw amino-acid sequence, 149 residues long: Arginine repressor (149 aa).

The protein belongs to the ArgR family.

Its subcellular location is the cytoplasm. It functions in the pathway amino-acid biosynthesis; L-arginine biosynthesis [regulation]. In terms of biological role, regulates arginine biosynthesis genes. This chain is Arginine repressor, found in Chlorobaculum tepidum (strain ATCC 49652 / DSM 12025 / NBRC 103806 / TLS) (Chlorobium tepidum).